The following is a 341-amino-acid chain: Nucleoid-associated protein Sden_2335 (341 aa).

The protein belongs to the YejK family.

It is found in the cytoplasm. Its subcellular location is the nucleoid. This is Nucleoid-associated protein Sden_2335 from Shewanella denitrificans (strain OS217 / ATCC BAA-1090 / DSM 15013).